The primary structure comprises 573 residues: ESX-1 secretion system protein EccA1 (573 aa).

Residue 334–341 coordinates ATP; it reads GPPGTGKT.

This sequence belongs to the CbxX/CfxQ family. As to quaternary structure, part of the ESX-1 / type VII secretion system (T7SS), which is composed of cytosolic and membrane components.

It localises to the cytoplasm. In terms of biological role, part of the ESX-1 / type VII specialized secretion system (T7SS), which exports several proteins including EsxA and EsxB. EccA1 exhibits ATPase activity and may provide energy for the export of ESX-1 substrates. The protein is ESX-1 secretion system protein EccA1 of Mycobacterium leprae (strain TN).